The chain runs to 47 residues: Small ribosomal subunit protein uS14 (47 aa).

Residues Cys12, Cys15, Cys30, and Cys33 each contribute to the Zn(2+) site.

Belongs to the universal ribosomal protein uS14 family. Zinc-binding uS14 subfamily. In terms of assembly, part of the 30S ribosomal subunit. Zn(2+) is required as a cofactor.

Its function is as follows. Binds 16S rRNA, required for the assembly of 30S particles. The chain is Small ribosomal subunit protein uS14 from Methanosphaera stadtmanae (strain ATCC 43021 / DSM 3091 / JCM 11832 / MCB-3).